We begin with the raw amino-acid sequence, 360 residues long: Inhibin alpha chain (360 aa).

Residues 1-17 (MWLQLLLLLLAPQGGHG) form the signal peptide. Residues 18–60 (CHGLELDRELVLAKVRALFLDALGPPPVTGEGGDPGVRRLHRR) constitute a propeptide that is removed on maturation. Residues 61 to 226 (HAVGGFMRRG…PPSGGERARR (166 aa)) constitute a propeptide, inhibin alpha N-terminal region. 2 N-linked (GlcNAc...) asparagine glycosylation sites follow: N140 and N262. Cystine bridges form between C256-C322, C285-C357, and C289-C359.

Belongs to the TGF-beta family. In terms of assembly, dimeric, linked by one or more disulfide bonds. Activin B is a dimer of alpha and beta-B. Inhibin A is a dimer of alpha and beta-A. Inhibin B is a dimer of alpha and beta-B. Interacts with TGFBR3L; this interaction regulates female fertility. Post-translationally, proteolytic processing yields a number of bioactive forms, consisting either solely of the mature alpha chain, of the most N-terminal propeptide linked through a disulfide bond to the mature alpha chain, or of the entire proprotein.

The protein resides in the secreted. Inhibins and activins inhibit and activate, respectively, the secretion of follitropin by the pituitary gland. Inhibins/activins are involved in regulating a number of diverse functions such as hypothalamic and pituitary hormone secretion, gonadal hormone secretion, germ cell development and maturation, erythroid differentiation, insulin secretion, nerve cell survival, embryonic axial development or bone growth, depending on their subunit composition. Inhibins appear to oppose the functions of activins. Its function is as follows. Inhibin A is a dimer of alpha/INHA and beta-A/INHBA that functions as a feedback regulator in the hypothalamic-pituitary-gonadal (HPG) axis. Inhibits the secretion of FSH from the anterior pituitary gland by acting on pituitary gonadotrope cells. Antagonizes activin A by binding to the proteoglycan, betaglycan, and forming a stable complex with and, thereby, sequestering type II activin receptors while excluding type I receptor. In terms of biological role, inhibin B is a dimer of alpha and beta-B that plays a crucial role in the regulation of the reproductive system by inhibiting the secretion of follicle-stimulating hormone (FSH) from the anterior pituitary gland. Thereby, maintains reproductive homeostasis in both males and females. Acts as a more potent suppressor of FSH release than inhibin A. Functions as competitive receptor antagonist binding activin type II receptors with high affinity in the presence of the TGF-beta type III coreceptor/TGFBR3L. This chain is Inhibin alpha chain (INHA), found in Bos taurus (Bovine).